A 119-amino-acid chain; its full sequence is Large ribosomal subunit protein uL18 (119 aa).

The segment at 1–20 is disordered; that stretch reads MSQIDKASRRQKIKDRSRVK. Over residues 9 to 20 the composition is skewed to basic residues; the sequence is RRQKIKDRSRVK.

This sequence belongs to the universal ribosomal protein uL18 family. As to quaternary structure, part of the 50S ribosomal subunit; part of the 5S rRNA/L5/L18/L25 subcomplex. Contacts the 5S and 23S rRNAs.

Its function is as follows. This is one of the proteins that bind and probably mediate the attachment of the 5S RNA into the large ribosomal subunit, where it forms part of the central protuberance. This Chlorobium phaeobacteroides (strain DSM 266 / SMG 266 / 2430) protein is Large ribosomal subunit protein uL18.